The sequence spans 249 residues: ATP synthase subunit a 1 (249 aa).

Transmembrane regions (helical) follow at residues 26 to 46 (FTNV…FLYL), 84 to 104 (FFPF…LGLF), 114 to 134 (IIVT…YGFF), 143 to 163 (LFVP…IEII), 193 to 213 (FVVS…LPLI), and 216 to 236 (VAIT…FTVL).

This sequence belongs to the ATPase A chain family. As to quaternary structure, F-type ATPases have 2 components, CF(1) - the catalytic core - and CF(0) - the membrane proton channel. CF(1) has five subunits: alpha(3), beta(3), gamma(1), delta(1), epsilon(1). CF(0) has three main subunits: a(1), b(2) and c(9-12). The alpha and beta chains form an alternating ring which encloses part of the gamma chain. CF(1) is attached to CF(0) by a central stalk formed by the gamma and epsilon chains, while a peripheral stalk is formed by the delta and b chains.

Its subcellular location is the cell inner membrane. Its function is as follows. Key component of the proton channel; it plays a direct role in the translocation of protons across the membrane. In Brucella anthropi (strain ATCC 49188 / DSM 6882 / CCUG 24695 / JCM 21032 / LMG 3331 / NBRC 15819 / NCTC 12168 / Alc 37) (Ochrobactrum anthropi), this protein is ATP synthase subunit a 1.